A 370-amino-acid polypeptide reads, in one-letter code: Aminomethyltransferase (370 aa).

The protein belongs to the GcvT family. In terms of assembly, the glycine cleavage system is composed of four proteins: P, T, L and H.

The catalysed reaction is N(6)-[(R)-S(8)-aminomethyldihydrolipoyl]-L-lysyl-[protein] + (6S)-5,6,7,8-tetrahydrofolate = N(6)-[(R)-dihydrolipoyl]-L-lysyl-[protein] + (6R)-5,10-methylene-5,6,7,8-tetrahydrofolate + NH4(+). In terms of biological role, the glycine cleavage system catalyzes the degradation of glycine. The sequence is that of Aminomethyltransferase from Clostridium botulinum (strain Kyoto / Type A2).